A 257-amino-acid polypeptide reads, in one-letter code: Glucosamine-6-phosphate deaminase (257 aa).

D64 serves as the catalytic Proton acceptor; for enolization step. Catalysis depends on N133, which acts as the For ring-opening step. H135 serves as the catalytic Proton acceptor; for ring-opening step. Residue E140 is the For ring-opening step of the active site.

It belongs to the glucosamine/galactosamine-6-phosphate isomerase family. NagB subfamily.

It catalyses the reaction alpha-D-glucosamine 6-phosphate + H2O = beta-D-fructose 6-phosphate + NH4(+). The protein operates within amino-sugar metabolism; N-acetylneuraminate degradation; D-fructose 6-phosphate from N-acetylneuraminate: step 5/5. Its function is as follows. Catalyzes the reversible isomerization-deamination of glucosamine 6-phosphate (GlcN6P) to form fructose 6-phosphate (Fru6P) and ammonium ion. This Corynebacterium urealyticum (strain ATCC 43042 / DSM 7109) protein is Glucosamine-6-phosphate deaminase.